A 1943-amino-acid polypeptide reads, in one-letter code: Beta-L-arabinobiosidase (1943 aa).

Positions 1-32 form a signal peptide, tat-type signal; sequence MHHSTRKRWLASIGAVAAVATLATGGAVTAQA. 2 F5/8 type C domains span residues 892–1049 and 1142–1302; these read TNVD…AYNT and SKEI…AYAI. Positions 1061–1157 constitute a PKD domain; it reads TPQVDAYVSS…HGIPSDGTVN (97 aa). 3 consecutive FIVAR domains span residues 1678-1716, 1746-1790, and 1823-1864; these read ANGL…EQVA, DAAK…AAVQ, and QAKK…VDAA. The tract at residues 1875 to 1906 is disordered; it reads TKVEQKPGSQQPGVTDTDKDDKDNKGDRVPPT. Over residues 1890–1902 the composition is skewed to basic and acidic residues; the sequence is DTDKDDKDNKGDR. The helical transmembrane segment at 1908–1928 threads the bilayer; sequence AAVSVVAAAAVLLTAAGVTIL.

Belongs to the glycosyl hydrolase 121 family. Predicted to be exported by the Tat system. The position of the signal peptide cleavage has not been experimentally proven.

It is found in the membrane. It carries out the reaction 4-O-(beta-L-arabinofuranosyl-(1-&gt;2)-beta-L-arabinofuranosyl-(1-&gt;2)-beta-L-arabinofuranosyl)-(2S,4S)-4-hydroxyproline + H2O = 4-O-(beta-L-arabinofuranosyl)-(2S,4S)-4-hydroxyproline + beta-L-arabinofuranosyl-(1-&gt;2)-beta-L-arabinofuranose. In terms of biological role, beta-L-arabinobiosidase that removes L-arabinofuranose-beta-1,2-L-arabinofuranose disaccharide from various substrates such as carrot extensin and potato lectin. Also acts on L-arabinofuranose (Ara)-beta-1,2-Ara-beta-1,2-Ara-beta-Hyp (Ara(3)-Hyp) but not on Ara-beta-1,3-Ara-beta-1,2-Ara-beta-1,2-Ara-beta--Hyp (Ara(4)-Hyp) or Ara-beta-1,2-Ara-beta-Hyp (Ara(2)-Hyp), suggesting a specificity for unmodified Ara(3)-Hyp substrate. In the presence of 1-alkanols, shows transglycosylation activity, retaining the anomeric configuration of the arabinofuranose residue. The sequence is that of Beta-L-arabinobiosidase (hypBA2) from Bifidobacterium longum subsp. longum (strain ATCC 15707 / DSM 20219 / JCM 1217 / NCTC 11818 / E194b).